Consider the following 202-residue polypeptide: Peroxynitrite isomerase (202 aa).

The short motif at 21–27 (GEWEGRG) is the GXWXGXG element. Residue His-193 coordinates heme b.

The protein belongs to the nitrobindin family. In terms of assembly, homodimer. Requires heme b as cofactor.

The catalysed reaction is peroxynitrite = nitrate. The protein operates within nitrogen metabolism. Heme-binding protein able to scavenge peroxynitrite and to protect free L-tyrosine against peroxynitrite-mediated nitration, by acting as a peroxynitrite isomerase that converts peroxynitrite to nitrate. Therefore, this protein likely plays a role in peroxynitrite sensing and in the detoxification of reactive nitrogen and oxygen species (RNS and ROS, respectively). Is able to bind nitric oxide (NO) in vitro, but may act as a sensor of peroxynitrite levels in vivo. The sequence is that of Peroxynitrite isomerase from Pseudarthrobacter chlorophenolicus (strain ATCC 700700 / DSM 12829 / CIP 107037 / JCM 12360 / KCTC 9906 / NCIMB 13794 / A6) (Arthrobacter chlorophenolicus).